Consider the following 398-residue polypeptide: Ribosomal RNA small subunit methyltransferase B (398 aa).

S-adenosyl-L-methionine is bound by residues 221–227 (CGGAGLK), aspartate 242, aspartate 268, and aspartate 283. Cysteine 336 acts as the Nucleophile in catalysis.

It belongs to the class I-like SAM-binding methyltransferase superfamily. RsmB/NOP family.

Its subcellular location is the cytoplasm. The enzyme catalyses cytidine(967) in 16S rRNA + S-adenosyl-L-methionine = 5-methylcytidine(967) in 16S rRNA + S-adenosyl-L-homocysteine + H(+). Specifically methylates the cytosine at position 967 (m5C967) of 16S rRNA. This Thermus thermophilus (strain ATCC 27634 / DSM 579 / HB8) protein is Ribosomal RNA small subunit methyltransferase B.